Reading from the N-terminus, the 301-residue chain is Glycine--tRNA ligase alpha subunit (301 aa).

The protein belongs to the class-II aminoacyl-tRNA synthetase family. In terms of assembly, tetramer of two alpha and two beta subunits.

Its subcellular location is the cytoplasm. It carries out the reaction tRNA(Gly) + glycine + ATP = glycyl-tRNA(Gly) + AMP + diphosphate. In Actinobacillus pleuropneumoniae serotype 5b (strain L20), this protein is Glycine--tRNA ligase alpha subunit.